The following is a 281-amino-acid chain: Glutamate racemase (281 aa).

Substrate contacts are provided by residues 13 to 14 (DS) and 45 to 46 (YG). The active-site Proton donor/acceptor is Cys76. 77–78 (NT) serves as a coordination point for substrate. The Proton donor/acceptor role is filled by Cys185. A substrate-binding site is contributed by 186–187 (TH).

This sequence belongs to the aspartate/glutamate racemases family.

It catalyses the reaction L-glutamate = D-glutamate. It functions in the pathway cell wall biogenesis; peptidoglycan biosynthesis. Functionally, provides the (R)-glutamate required for cell wall biosynthesis. In Rippkaea orientalis (strain PCC 8801 / RF-1) (Cyanothece sp. (strain PCC 8801)), this protein is Glutamate racemase.